The sequence spans 1186 residues: Pesticidal crystal protein Cry14Aa (1186 aa).

It belongs to the delta endotoxin family.

Functionally, promotes colloidosmotic lysis by binding to the midgut epithelial cells of insects. This is Pesticidal crystal protein Cry14Aa (cry14Aa) from Bacillus thuringiensis subsp. sotto.